Here is a 303-residue protein sequence, read N- to C-terminus: MNIHRKPEWLRKKINPAAHGAMDELLGELRLHTVCREARCPNITECFRERQATFLILGAECTRLCSFCNVTKGEPLPPDPDEPARVAQAVVRLSLAHVVITSPTRDDLPDGGAGHYVATVATIGRVAPATVVELLIPDFLGSRAALADVVAAAPRIIGHNVETVPRLYAIRAGADYGRSLAVLRTLRELAPGCATKSGLMLGLGETEEEVLAVMADLRRVDCTYLSLGQYLAPSRFHHPVREFVLPETFDRLKELAEKMGFRHVESGPYVRSSYHAAGYGGGTRTDQPVASGCLSDQEGVSAQ.

[4Fe-4S] cluster contacts are provided by Cys-35, Cys-40, Cys-46, Cys-61, Cys-65, Cys-68, and Ser-273. The region spanning 47–262 is the Radical SAM core domain; the sequence is FRERQATFLI…KELAEKMGFR (216 aa).

The protein belongs to the radical SAM superfamily. Lipoyl synthase family. Requires [4Fe-4S] cluster as cofactor.

It localises to the cytoplasm. The enzyme catalyses [[Fe-S] cluster scaffold protein carrying a second [4Fe-4S](2+) cluster] + N(6)-octanoyl-L-lysyl-[protein] + 2 oxidized [2Fe-2S]-[ferredoxin] + 2 S-adenosyl-L-methionine + 4 H(+) = [[Fe-S] cluster scaffold protein] + N(6)-[(R)-dihydrolipoyl]-L-lysyl-[protein] + 4 Fe(3+) + 2 hydrogen sulfide + 2 5'-deoxyadenosine + 2 L-methionine + 2 reduced [2Fe-2S]-[ferredoxin]. It participates in protein modification; protein lipoylation via endogenous pathway; protein N(6)-(lipoyl)lysine from octanoyl-[acyl-carrier-protein]: step 2/2. Functionally, catalyzes the radical-mediated insertion of two sulfur atoms into the C-6 and C-8 positions of the octanoyl moiety bound to the lipoyl domains of lipoate-dependent enzymes, thereby converting the octanoylated domains into lipoylated derivatives. The polypeptide is Lipoyl synthase (Geobacter sulfurreducens (strain ATCC 51573 / DSM 12127 / PCA)).